Consider the following 206-residue polypeptide: Ras-related protein Ral-B (206 aa).

21-29 (GSGGVGKSA) is a binding site for GTP. Positions 43-51 (YEPTKADSY) match the Effector region motif. GTP contacts are provided by residues 68-72 (DTAGQ), 128-131 (NKSD), and 158-160 (SAK). Residues 180–189 (KMSENKDKNG) are compositionally biased toward basic and acidic residues. The segment at 180–206 (KMSENKDKNGKKSSKNKKSFKERCCLL) is disordered. A Cysteine methyl ester modification is found at C203. A lipid anchor (S-geranylgeranyl cysteine) is attached at C203. Positions 204–206 (CLL) are cleaved as a propeptide — removed in mature form.

This sequence belongs to the small GTPase superfamily. Ras family. In terms of assembly, interacts with EXOC2/Sec5 and EXOC8/Exo84. Interacts (via effector domain) with RALBP1. In terms of processing, prenylation is essential for membrane localization. Post-translationally, the farnesylated form confers resistance to the proapoptotic and anti-anchorage-dependent growth effects of some geranylgeranyltransferase I inhibitors.

It is found in the cell membrane. The protein localises to the midbody. It catalyses the reaction GTP + H2O = GDP + phosphate + H(+). Alternates between an inactive form bound to GDP and an active form bound to GTP. Activated by a guanine nucleotide-exchange factor (GEF) and inactivated by a GTPase-activating protein (GAP). Functionally, multifunctional GTPase involved in a variety of cellular processes including gene expression, cell migration, cell proliferation, oncogenic transformation and membrane trafficking. Accomplishes its multiple functions by interacting with distinct downstream effectors. Acts as a GTP sensor for GTP-dependent exocytosis of dense core vesicles. Required both to stabilize the assembly of the exocyst complex and to localize functional exocyst complexes to the leading edge of migrating cells. Required for suppression of apoptosis. In late stages of cytokinesis, upon completion of the bridge formation between dividing cells, mediates exocyst recruitment to the midbody to drive abscission. Involved in ligand-dependent receptor mediated endocytosis of the EGF and insulin receptors. This Pongo abelii (Sumatran orangutan) protein is Ras-related protein Ral-B (RALB).